The primary structure comprises 564 residues: Iron-sensing transcriptional repressor (564 aa).

The GATA-type 1 zinc finger occupies 12–36 (CSNCHKTTTSLWRRGPDNSLLCNAC). The interval 100-170 (ASKSQSGRKS…SSPPHEPSVT (71 aa)) is disordered. At Ser-109 the chain carries Phosphoserine. A compositionally biased stretch (low complexity) spans 109-120 (SLSPNPSSVPSS). Polar residues predominate over residues 135–148 (QIVSDTTTETSNGT). The segment at 172–196 (CQNCATTNTPLWRRDESGNPICNAC) adopts a GATA-type 2 zinc-finger fold. 3 disordered regions span residues 226-285 (GNAN…NTGV), 381-409 (DSSK…NPLG), and 443-496 (LLNP…VQGS). 4 stretches are compositionally biased toward polar residues: residues 240–253 (SGDS…QSTR), 260–271 (SFPNGNGHASGN), 381–407 (DSSK…QSNP), and 450–486 (PSNS…SPVS).

In terms of assembly, interacts with tup11.

The protein localises to the nucleus. With respect to regulation, activated by iron. Functionally, transcriptional repressor that binds the consensus promoter sequence 5'-[AT]GATAA-3' during iron-replete conditions to down-regulate transcription of target genes. Represses the expression of the iron transporter fio1 in response to high iron concentrations. Also represses the expression of str1, str2 and str3. Represses the expression of shu1 in presence of iron. The polypeptide is Iron-sensing transcriptional repressor (Schizosaccharomyces pombe (strain 972 / ATCC 24843) (Fission yeast)).